The primary structure comprises 166 residues: Coiled-coil domain-containing protein 12 (166 aa).

M1 carries the N-acetylmethionine modification. A coiled-coil region spans residues 8-28; it reads VGRLEEEALRRKERLKALREK. The span at 21–53 shows a compositional bias: basic and acidic residues; sequence RLKALREKTGRKDREDGEPQTKQLREEGEEVGK. A disordered region spans residues 21-55; that stretch reads RLKALREKTGRKDREDGEPQTKQLREEGEEVGKHR. Residue K53 is modified to N6-acetyllysine. Residue K94 forms a Glycyl lysine isopeptide (Lys-Gly) (interchain with G-Cter in SUMO2) linkage. Residues 115–144 are a coiled coil; the sequence is DLKRDVAKKLEKLEKRTQRAIAELIRERLK. The segment at 146 to 166 is disordered; sequence QEDSLASAVDATTGQEACDSD. Phosphoserine is present on residues S149 and S165.

The protein is Coiled-coil domain-containing protein 12 (Ccdc12) of Mus musculus (Mouse).